The primary structure comprises 368 residues: MREAGEEKVAWKYFTRDVVPFAAMFAVECATVGSNTLFKAATLRGLSFYVFVFYSYIVSTLLLLPLSVIFGRSRRLPAAKSPLFFKIFLLGLVGFMSQIAGCKGIAYSSPTLASAISNLTPAFTFTLAVIFRMEQVRLRSSATQAKIIGAILSISGALVVVLYKGPQVLASASFTTVLPTVTLHQQLTSIESSWIIGGLLLASQYFLISVWYILQTRVMEVYPEEITVVFFYNLFATLISVPVCLFAESNLTSWVLKPDISLAAIIYSGVFVSLFSALTHTWGLHLKGPVYISLFRPLSIAIAVAMGAIFLGDALHLGSVIGSMILCIGFYTVIWGKAREDTIKTVAGSEQSPLLLTHIIEDGAFPLS.

Transmembrane regions (helical) follow at residues 18 to 38 (VVPFAAMFAVECATVGSNTLF), 50 to 70 (VFVFYSYIVSTLLLLPLSVIF), 82 to 102 (PLFFKIFLLGLVGFMSQIAGC), 111 to 131 (TLASAISNLTPAFTFTLAVIF), 142 to 162 (ATQAKIIGAILSISGALVVVL), 194 to 214 (WIIGGLLLASQYFLISVWYIL), 226 to 246 (ITVVFFYNLFATLISVPVCLF), 260 to 280 (ISLAAIIYSGVFVSLFSALTH), 292 to 312 (ISLFRPLSIAIAVAMGAIFLG), and 315 to 335 (LHLGSVIGSMILCIGFYTVIW). 2 consecutive EamA domains span residues 33–161 (GSNT…LVVV) and 208–334 (ISVW…YTVI).

This sequence belongs to the drug/metabolite transporter (DMT) superfamily. Plant drug/metabolite exporter (P-DME) (TC 2.A.7.4) family.

It localises to the membrane. The chain is WAT1-related protein At5g40240 from Arabidopsis thaliana (Mouse-ear cress).